A 75-amino-acid chain; its full sequence is Veswaprin-c (75 aa).

The signal sequence occupies residues 1–24 (MSSGGLLLLLGLLTLWAELTPVSS). Residues 27–72 (RPKKPGLCPPRPQKPPCVRECKNDWRCPGERKCCRYGCIYECRDPI) form the WAP domain. Cystine bridges form between C34/C60, C43/C64, C47/C59, and C53/C68.

This sequence belongs to the venom waprin family. Expressed by the venom gland.

It is found in the secreted. Its function is as follows. Damages membranes of susceptible bacteria. Has no hemolytic activity. Not toxic to mice. Does not inhibit the proteinases elastase and cathepsin G. This is Veswaprin-c from Demansia vestigiata (Lesser black whip snake).